The primary structure comprises 304 residues: Coenzyme PQQ synthesis protein B (304 aa).

The protein belongs to the PqqB family.

Its pathway is cofactor biosynthesis; pyrroloquinoline quinone biosynthesis. May be involved in the transport of PQQ or its precursor to the periplasm. This chain is Coenzyme PQQ synthesis protein B, found in Stutzerimonas stutzeri (Pseudomonas stutzeri).